Reading from the N-terminus, the 396-residue chain is Protein GTS1 (396 aa).

The Arf-GAP domain maps to aspartate 14–aspartate 141. A C4-type zinc finger spans residues cysteine 30–cysteine 53. Basic and acidic residues predominate over residues aspartate 148–arginine 161. Disordered stretches follow at residues aspartate 148–arginine 194 and lysine 233–isoleucine 266. At serine 153 the chain carries Phosphoserine. Tyrosine 181 bears the Phosphotyrosine mark. A phosphoserine mark is found at serine 184 and serine 187. The UBA domain maps to serine 193 to serine 234. Positions serine 234–threonine 249 are enriched in low complexity. At serine 240 the chain carries Phosphoserine. Position 249 is a phosphothreonine (threonine 249).

It is found in the nucleus. Appears to modulate the timing of budding to obtain an appropriate cell size independent of the DNA replication cycle. Transcription factor involved in both heat resistance and flocculation. The polypeptide is Protein GTS1 (GTS1) (Saccharomyces cerevisiae (strain ATCC 204508 / S288c) (Baker's yeast)).